Consider the following 1077-residue polypeptide: ATP-dependent helicase/deoxyribonuclease subunit B (1077 aa).

The protein belongs to the helicase family. AddB/RexB type 2 subfamily. Heterodimer of AddA and RexB. Mg(2+) serves as cofactor.

The heterodimer acts as both an ATP-dependent DNA helicase and an ATP-dependent, dual-direction single-stranded exonuclease. Recognizes the chi site generating a DNA molecule suitable for the initiation of homologous recombination. This subunit has 5' -&gt; 3' nuclease activity but not helicase activity. The polypeptide is ATP-dependent helicase/deoxyribonuclease subunit B (Streptococcus agalactiae serotype III (strain NEM316)).